A 302-amino-acid chain; its full sequence is Ribosomal protein L11 methyltransferase (302 aa).

The S-adenosyl-L-methionine site is built by T148, G169, D191, and N237.

It belongs to the methyltransferase superfamily. PrmA family.

The protein resides in the cytoplasm. The catalysed reaction is L-lysyl-[protein] + 3 S-adenosyl-L-methionine = N(6),N(6),N(6)-trimethyl-L-lysyl-[protein] + 3 S-adenosyl-L-homocysteine + 3 H(+). Methylates ribosomal protein L11. The sequence is that of Ribosomal protein L11 methyltransferase from Desulfosudis oleivorans (strain DSM 6200 / JCM 39069 / Hxd3) (Desulfococcus oleovorans).